Here is a 698-residue protein sequence, read N- to C-terminus: Probable Xaa-Pro aminopeptidase P (698 aa).

Residues Asp509, Asp520, Glu604, and Glu618 each coordinate Mn(2+).

Belongs to the peptidase M24B family. Mn(2+) is required as a cofactor.

It carries out the reaction Release of any N-terminal amino acid, including proline, that is linked to proline, even from a dipeptide or tripeptide.. In terms of biological role, catalyzes the removal of a penultimate prolyl residue from the N-termini of peptides. The sequence is that of Probable Xaa-Pro aminopeptidase P (AMPP) from Trichophyton verrucosum (strain HKI 0517).